The primary structure comprises 187 residues: UPF0301 protein PMI0339 (187 aa).

The protein belongs to the UPF0301 (AlgH) family.

The sequence is that of UPF0301 protein PMI0339 from Proteus mirabilis (strain HI4320).